The primary structure comprises 98 residues: Aspartyl/glutamyl-tRNA(Asn/Gln) amidotransferase subunit C (98 aa).

The segment at proline 70–aspartate 98 is disordered.

It belongs to the GatC family. As to quaternary structure, heterotrimer of A, B and C subunits.

It catalyses the reaction L-glutamyl-tRNA(Gln) + L-glutamine + ATP + H2O = L-glutaminyl-tRNA(Gln) + L-glutamate + ADP + phosphate + H(+). The enzyme catalyses L-aspartyl-tRNA(Asn) + L-glutamine + ATP + H2O = L-asparaginyl-tRNA(Asn) + L-glutamate + ADP + phosphate + 2 H(+). In terms of biological role, allows the formation of correctly charged Asn-tRNA(Asn) or Gln-tRNA(Gln) through the transamidation of misacylated Asp-tRNA(Asn) or Glu-tRNA(Gln) in organisms which lack either or both of asparaginyl-tRNA or glutaminyl-tRNA synthetases. The reaction takes place in the presence of glutamine and ATP through an activated phospho-Asp-tRNA(Asn) or phospho-Glu-tRNA(Gln). The sequence is that of Aspartyl/glutamyl-tRNA(Asn/Gln) amidotransferase subunit C from Streptomyces avermitilis (strain ATCC 31267 / DSM 46492 / JCM 5070 / NBRC 14893 / NCIMB 12804 / NRRL 8165 / MA-4680).